Consider the following 339-residue polypeptide: Ketol-acid reductoisomerase (NADP(+)) (339 aa).

The region spanning 1-182 is the KARI N-terminal Rossmann domain; that stretch reads MKVYYDSDAD…GGGRSGVIET (182 aa). NADP(+) is bound by residues 24–27, Arg48, Ser51, Ser53, and 83–86; these read YGSQ and DEHQ. His108 is an active-site residue. NADP(+) is bound at residue Gly134. Residues 183–328 enclose the KARI C-terminal knotted domain; it reads TFREEVETDL…ARLRKMMPWI (146 aa). Asp191, Glu195, Glu227, and Glu231 together coordinate Mg(2+). Ser252 contributes to the substrate binding site.

The protein belongs to the ketol-acid reductoisomerase family. Mg(2+) serves as cofactor.

It catalyses the reaction (2R)-2,3-dihydroxy-3-methylbutanoate + NADP(+) = (2S)-2-acetolactate + NADPH + H(+). The catalysed reaction is (2R,3R)-2,3-dihydroxy-3-methylpentanoate + NADP(+) = (S)-2-ethyl-2-hydroxy-3-oxobutanoate + NADPH + H(+). Its pathway is amino-acid biosynthesis; L-isoleucine biosynthesis; L-isoleucine from 2-oxobutanoate: step 2/4. The protein operates within amino-acid biosynthesis; L-valine biosynthesis; L-valine from pyruvate: step 2/4. In terms of biological role, involved in the biosynthesis of branched-chain amino acids (BCAA). Catalyzes an alkyl-migration followed by a ketol-acid reduction of (S)-2-acetolactate (S2AL) to yield (R)-2,3-dihydroxy-isovalerate. In the isomerase reaction, S2AL is rearranged via a Mg-dependent methyl migration to produce 3-hydroxy-3-methyl-2-ketobutyrate (HMKB). In the reductase reaction, this 2-ketoacid undergoes a metal-dependent reduction by NADPH to yield (R)-2,3-dihydroxy-isovalerate. In Zymomonas mobilis subsp. mobilis (strain ATCC 31821 / ZM4 / CP4), this protein is Ketol-acid reductoisomerase (NADP(+)).